The following is a 515-amino-acid chain: Cytoplasmic tRNA 2-thiolation protein 2 (515 aa).

Disordered regions lie at residues 1 to 24 and 188 to 217; these read MCQVGEDYGEPAPEEPPPAPRPSR and LGAGGGPGPTQGEEQPPQPPLDPQNLARPP. C2 carries the N-acetylcysteine modification. Phosphoserine occurs at positions 415, 419, 435, and 508.

This sequence belongs to the CTU2/NCS2 family. In terms of assembly, component of a complex at least composed of URM1, CTU2/NCS2 and CTU1/ATPBD3.

It localises to the cytoplasm. It participates in tRNA modification; 5-methoxycarbonylmethyl-2-thiouridine-tRNA biosynthesis. Its function is as follows. Plays a central role in 2-thiolation of mcm(5)S(2)U at tRNA wobble positions of tRNA(Lys), tRNA(Glu) and tRNA(Gln). May act by forming a heterodimer with CTU1/ATPBD3 that ligates sulfur from thiocarboxylated URM1 onto the uridine of tRNAs at wobble position. The chain is Cytoplasmic tRNA 2-thiolation protein 2 from Homo sapiens (Human).